The primary structure comprises 683 residues: DNA ligase (683 aa).

NAD(+)-binding positions include 43-47 (DAEYD), 92-93 (SL), and Glu-125. The N6-AMP-lysine intermediate role is filled by Lys-127. NAD(+) contacts are provided by Arg-148, Glu-185, Lys-303, and Lys-327. The Zn(2+) site is built by Cys-421, Cys-424, Cys-439, and Cys-445. The 80-residue stretch at 604–683 (IADNPLKGKN…QEFIALTGEN (80 aa)) folds into the BRCT domain.

The protein belongs to the NAD-dependent DNA ligase family. LigA subfamily. Mg(2+) serves as cofactor. The cofactor is Mn(2+).

The catalysed reaction is NAD(+) + (deoxyribonucleotide)n-3'-hydroxyl + 5'-phospho-(deoxyribonucleotide)m = (deoxyribonucleotide)n+m + AMP + beta-nicotinamide D-nucleotide.. In terms of biological role, DNA ligase that catalyzes the formation of phosphodiester linkages between 5'-phosphoryl and 3'-hydroxyl groups in double-stranded DNA using NAD as a coenzyme and as the energy source for the reaction. It is essential for DNA replication and repair of damaged DNA. This Actinobacillus pleuropneumoniae serotype 5b (strain L20) protein is DNA ligase.